A 360-amino-acid chain; its full sequence is Phospho-N-acetylmuramoyl-pentapeptide-transferase (360 aa).

Transmembrane regions (helical) follow at residues 20–40 (YITFRAGGAFFTALLFGFFFG), 71–91 (TPTMGGLLILAALTIGTLLWA), 93–113 (LDNGYVWIVLLVTLGFAAIGF), 134–154 (LLIGLCIAAAAGAAAAWLHPA), 168–188 (ALINLGLLYVPFTVLVILGAA), 199–219 (GLAIMPVMIAAASFSVIAYMV), 239–259 (LAVFVAALIGGGLGFLWYNAP), 263–283 (VFMGDTGSLALGGALGAIAVV), 288–308 (IVLAIVGGLFVVEALSVIIQV), and 337–357 (QIVIRFWIIALILALIGLATL).

It belongs to the glycosyltransferase 4 family. MraY subfamily. It depends on Mg(2+) as a cofactor.

It localises to the cell inner membrane. It carries out the reaction UDP-N-acetyl-alpha-D-muramoyl-L-alanyl-gamma-D-glutamyl-meso-2,6-diaminopimeloyl-D-alanyl-D-alanine + di-trans,octa-cis-undecaprenyl phosphate = di-trans,octa-cis-undecaprenyl diphospho-N-acetyl-alpha-D-muramoyl-L-alanyl-D-glutamyl-meso-2,6-diaminopimeloyl-D-alanyl-D-alanine + UMP. Its pathway is cell wall biogenesis; peptidoglycan biosynthesis. Its function is as follows. Catalyzes the initial step of the lipid cycle reactions in the biosynthesis of the cell wall peptidoglycan: transfers peptidoglycan precursor phospho-MurNAc-pentapeptide from UDP-MurNAc-pentapeptide onto the lipid carrier undecaprenyl phosphate, yielding undecaprenyl-pyrophosphoryl-MurNAc-pentapeptide, known as lipid I. The polypeptide is Phospho-N-acetylmuramoyl-pentapeptide-transferase (Paracoccus denitrificans (strain Pd 1222)).